The primary structure comprises 295 residues: SPX domain-containing protein 1 (295 aa).

Residues Met-1–Gln-166 enclose the SPX domain. The segment at Leu-199–Gly-227 is disordered. Residues Glu-204–Pro-216 are compositionally biased toward basic and acidic residues.

In terms of assembly, interacts (via SPX domain) with PHR2 (via C-terminus). Interacts with RLI1 in the nucleus to prevents its positive regulation of leaf inclination during phosphate (Pi) starvation. In terms of tissue distribution, predominantly expressed in roots and leaves. Localized in leaves lamina joints.

The protein resides in the nucleus. Functionally, involved in plant adaptation to phosphate (Pi) starvation. Inhibits PHR2 DNA-binding activity via a Pi-dependent protein interaction. Suppresses the regulation on expression of PT2 by PHR2 and accumulation of shoot Pi. Optimizes growth under phosphate-limited conditions through a negative feedback loop of the PSI (phosphate starvation-induced) signaling pathway. Regulates the expression of SPX2, SPX3 and SPX5. May be an important link between signal transduction pathways related to phosphate starvation and cold stress. Together with SPX2, plays a negative role in the regulation of leaf inclination by preventing RLI1 transcription factor activity in Pi depleted conditions. The sequence is that of SPX domain-containing protein 1 from Oryza sativa subsp. japonica (Rice).